The primary structure comprises 443 residues: MGGVGEPDWEPGQRGAPLPTLRWEQVRRHNLPGDKWLVIERRVYDISRWAQRHPGGSRLIGHHGAEDATDAFHAFHQDLSFVRKFLQPLLIGELAPEEPSQDGPQNTQLIEDFRALRQAVEDMKLFEAKPAFFGLLLGHILAMEVLAWLMIYMLGPGWVPSTLAALILAISQAQSWCLQHDLGHTSIFRNSRWNHLAQQFVMGQLKGFSAHWWNFRHFQHHAKPNIFHKDPDVTVAPVFLLGESSVEYGKKKRRYLPYNHQHLYFFLIGPPLLTLVNFEVENLAYMLVCMQWMDLLWAASFYARFLLSYIPFYGIPGALLLFVAVRVLESHWFVWITQMNHIPREIGHEKHRDWASSQLAATCNVEPSLFIDWFSGHLNFQIEHHLFPTMPRHNYRRVAPLVKALCAKHGLSYEVKPFLTALVDIIRSLKKSGNVWLEAYLHQ.

Topologically, residues 1-130 (MGGVGEPDWE…EDMKLFEAKP (130 aa)) are cytoplasmic. One can recognise a Cytochrome b5 heme-binding domain in the interval 18–95 (LPTLRWEQVR…LQPLLIGELA (78 aa)). The helical transmembrane segment at 131-151 (AFFGLLLGHILAMEVLAWLMI) threads the bilayer. A topological domain (lumenal) is located at residue Tyr-152. Residues 153 to 173 (MLGPGWVPSTLAALILAISQA) traverse the membrane as a helical segment. Residues 174-259 (QSWCLQHDLG…KKKRRYLPYN (86 aa)) are Cytoplasmic-facing. The Histidine box-1 signature appears at 180-184 (HDLGH). The Histidine box-2 signature appears at 217-221 (HFQHH). A helical transmembrane segment spans residues 260–280 (HQHLYFFLIGPPLLTLVNFEV). Topologically, residues 281–282 (EN) are lumenal. A helical membrane pass occupies residues 283–303 (LAYMLVCMQWMDLLWAASFYA). Residue Arg-304 is a topological domain, cytoplasmic. A helical membrane pass occupies residues 305 to 325 (FLLSYIPFYGIPGALLLFVAV). The Lumenal segment spans residues 326-443 (RVLESHWFVW…NVWLEAYLHQ (118 aa)). The short motif at 381–385 (QIEHH) is the Histidine box-3 element.

Belongs to the fatty acid desaturase type 1 family.

It localises to the endoplasmic reticulum membrane. It catalyses the reaction an N-acylsphing-4-enine + 2 Fe(II)-[cytochrome b5] + O2 + 2 H(+) = an N-acyl-sphinga-4E,14Z-dienine + 2 Fe(III)-[cytochrome b5] + 2 H2O. The catalysed reaction is N-(hexanoyl)sphing-4-enine + 2 Fe(II)-[cytochrome b5] + O2 + 2 H(+) = N-hexanoyl-sphinga-4E,14Z-dienine + 2 Fe(III)-[cytochrome b5] + 2 H2O. It carries out the reaction sphing-4-enine + 2 Fe(II)-[cytochrome b5] + O2 + 2 H(+) = sphinga-4E,14Z-dienine + 2 Fe(III)-[cytochrome b5] + 2 H2O. The enzyme catalyses (11E)-octadecenoyl-CoA + 2 Fe(II)-[cytochrome b5] + O2 + 2 H(+) = (11E,13Z)-octadecadienoyl-CoA + 2 Fe(III)-[cytochrome b5] + 2 H2O. It catalyses the reaction N-acyl-1-deoxysphinganine + 2 Fe(II)-[cytochrome b5] + O2 + 2 H(+) = N-acyl-1-deoxysphing-14Z-enine + 2 Fe(III)-[cytochrome b5] + 2 H2O. The catalysed reaction is an N-acylsphinganine + 2 Fe(II)-[cytochrome b5] + O2 + 2 H(+) = an N-acylsphing-14Z-enine + 2 Fe(III)-[cytochrome b5] + 2 H2O. Its pathway is lipid metabolism; polyunsaturated fatty acid biosynthesis. It participates in lipid metabolism; sphingolipid metabolism. Mammals have different sphingoid bases that differ in their length and/or pattern of desaturation and hydroxyl groups. The predominant sphingoid base that comprises mammalian ceramides is sphing-4-enine (sphingosine or SPH) which has a trans (E) desaturation at carbon 4. FADS3 is a desaturase that introduces a cis (Z) double bond between carbon 14 and carbon 15 of the sphingoid base (also known as long chain base, LCB), producing LCBs such as sphinga-4,14-dienine (SPD, d18:2(4E,14Z)) from SPH. Prefers SPH-containing ceramides (N-acylsphing-4-enines) as substrates. Capable of metabolizing also the SPH in its free form. SPD ceramides occur widely in mammalian tissues and cells. Due to their unusual structure containing a cis double bond, SPD ceramides may have an opposite, negative role in lipid microdomain formation relative to conventional ceramides. Could be involved in the detoxification of 1-deoxy sphingolipids, by desaturating the cytotoxic 1-deoxysphinganine (1-deoxySA, m18:0), produced under pathological conditions, to 1-deoxysphingenine (1-deoxysphingosine, 1-deoxySO, m18:1). Although prefers SPH-containing ceramides (N-acylsphing-4-enines) as substrates, it also exhibits activity toward dihydrosphingosine-containing CERs (N-acylsphinganines) and produces 14Z-SPH-containing sphingolipids. Its desaturase mechanism involves an electron transfer facilitated by cytochrome b5. FADS3 also acts as a methyl-end fatty acyl coenzyme A (CoA) desaturase that introduces a cis double bond between the preexisting double bond and the terminal methyl group of the fatty acyl chain. Desaturates (11E)-octadecenoate (trans-vaccenoate, the predominant trans fatty acid in human milk) at carbon 13 to generate (11E,13Z)-octadecadienoate (also known as conjugated linoleic acid 11E,13Z-CLA). This Bos taurus (Bovine) protein is Fatty acid desaturase 3.